Reading from the N-terminus, the 120-residue chain is Large ribosomal subunit protein uL18 (120 aa).

It belongs to the universal ribosomal protein uL18 family. As to quaternary structure, part of the 50S ribosomal subunit; part of the 5S rRNA/L5/L18/L25 subcomplex. Contacts the 5S and 23S rRNAs.

In terms of biological role, this is one of the proteins that bind and probably mediate the attachment of the 5S RNA into the large ribosomal subunit, where it forms part of the central protuberance. This chain is Large ribosomal subunit protein uL18, found in Geobacillus kaustophilus (strain HTA426).